Consider the following 167-residue polypeptide: 3-isopropylmalate dehydratase small subunit (167 aa).

This sequence belongs to the LeuD family. LeuD type 2 subfamily. As to quaternary structure, heterodimer of LeuC and LeuD.

It carries out the reaction (2R,3S)-3-isopropylmalate = (2S)-2-isopropylmalate. It participates in amino-acid biosynthesis; L-leucine biosynthesis; L-leucine from 3-methyl-2-oxobutanoate: step 2/4. In terms of biological role, catalyzes the isomerization between 2-isopropylmalate and 3-isopropylmalate, via the formation of 2-isopropylmaleate. In Sulfurimonas denitrificans (strain ATCC 33889 / DSM 1251) (Thiomicrospira denitrificans (strain ATCC 33889 / DSM 1251)), this protein is 3-isopropylmalate dehydratase small subunit.